The sequence spans 1260 residues: MLQIRVFNYNDPIDGENIVELRYHNRSPVKAFQIVDGIWIIPERYNFTNDTKKVPDDRALTILEDEVFAVRENDYLTTDVNEKNSFLNNITKLFKRINSSNIGNQLLNYISTSVPYPVVSTNSIKARDYNTIKFDSIDGRRITKSANVLIYGPSMKNLLDKQTRAINGEEAKNGIGCLSDIIFSPNYLSVQTVSSSRFVEDPASSLTHELIHALHNLYGIQYPGEEKFKFGGFIDKLLGTRECIDYEEVLTYGGKDSEIIRKKIDKSLYPDDFVNKYGEMYKRIKGSNPYYPDEKKLKQSFLNRMNPFDQNGTFDTKEFKNHLMDLWFGLNESEFAKEKKILVRKHYITKQINPKYTELTNDVYTEDKGFVNGQSIDNQNFKIIDDLISKKVKLCSITSKNRVNICIDVNKEDLYFISDKEGFENIDFSEPEIRYDSNVTTATTSSFTDHFLVNRTFNDSDRFPPVELEYAIEPAEIVDNTIMPDIDQKSEISLDNLTTFHYLNAQKMDLGFDSSKEQLKMVTSIEESLLDSKKVYTPFTRTAHSVNERISGIAESYLFYQWLKTVINDFTDELNQKSNTDKVADISWIIPYVGPALNIGLDLSHGDFTKAFEDLGVSILFAIAPEFATISLVALSIYENIEEDSQKEKVINKVENTLARRIEKWHQVYAFMVAQWWGMVHTQIDTRIHQMYESLSHQIIAIKANMEYQLSHYKGPDNDKLLLKDYIYEAEIALNTSANRAMKNIERFMIESSISYLKNNLIPSVVENLKKFDADTKKNLDQFIDKNSSVLGSDLHILKSQVDLELNPTTKVAFNIQSIPDFDINALIDRLGIQLKDNLVFSLGVESDKIKDLSGNNTNLEVKTGVQIVDGRDSKTIRLNSNENSSIIVQKNESINFSYFSDFTISFWIRVPRLNKNDFIDLGIEYDLVNNMDNQGWKISLKDGNLVWRMKDRFGKIIDIITSLTFSNSFIDKYISSNIWRHITITVNQLKDCTLYINGDKIDSKSINELRGIDNNSPIIFKLEGNRNKNQFIRLDQFNIYQRALNESEVEMLFNSYFNSNILRDFWGEPLEYNKSYYMINQAILGGPLRSTYKSWYGEYYPYISRMRTFNVSSFILIPYLYHKGSDVEKVKIINKNNVDKYVRKNDVADVKFENYGNLILTLPMYSKIKERYMVLNEGRNGDLKLIQLQSNDKYYCQIRIFEMYRNGLLSIADDENWLYSSGWYLYSSGWYLDNYKTLDLKKHTKTNWYFVSEDEGWKE.

Histidine 208 is a Zn(2+) binding site. The active-site Proton acceptor is the glutamate 209. Zn(2+)-binding residues include histidine 212 and glutamate 248. Cysteine 395 and cysteine 406 are disulfide-bonded. Residues 401–824 (NRVNICIDVN…NIQSIPDFDI (424 aa)) form a translocation domain (TD) region. Residues 825-1065 (NALIDRLGIQ…SYFNSNILRD (241 aa)) are HCN. The tract at residues 1066 to 1260 (FWGEPLEYNK…FVSEDEGWKE (195 aa)) is HCC.

It belongs to the peptidase M27 family. Requires Zn(2+) as cofactor.

It catalyses the reaction Limited hydrolysis of proteins of the neuroexocytosis apparatus, synaptobrevins, SNAP25 or syntaxin. No detected action on small molecule substrates.. Preincubation with the metalloprotease inhibitor 1,10-phenanthroline before injection into Anopheles or Aedes decreases toxicity. In terms of biological role, neurotoxin active against Anopheles but not Aedes mosquitoes upon oral ingestion; expression of the ptox operon (ntnh-orfX1-orfX2-orfX3-pmp1) in B.thuringiensis kills Anopheles but not Aedes mosquito 3rd instar larvae. The ntnh-pmp1 construct is about half as toxic. PMP1 is toxic when injected directly into Anopheles or Aedes mosquito 3rd instar larvae, larvae no longer move, suggesting they are paralyzed. Adult mosquitoes (Anopheles or Aedes) and Drosophila lose the ability to fly in a dose-dependent manner by 24 hours after injection with 100 pg neurotoxin. Not toxic upon injection in mice. Its function is as follows. Neurotoxin that cleaves A.gambiae syntaxin 1a, probably hydrolyzing the '240-Glu-|-His-241' bond. Does not cleave A.gambiae n-synaptobrevin or SNAP-25, nor human syntaxin 1A. Responsible for host epithelial cell transcytosis, host nerve cell targeting and translocation of PMP1 light chain (LC) into host cytosol. Composed of 3 subdomains; the translocation domain (TD), and N-terminus and C-terminus of the receptor-binding domain (RBD), called HCN and HCC. The chain is Paraclostridial mosquitocidal protein 1 from Paraclostridium bifermentans (Clostridium bifermentans).